Here is a 121-residue protein sequence, read N- to C-terminus: MARISGVDIPREKRVEIALTYIYGVGLTRSQKILASTGVSPDTRVKDLSDADVQKLRAAAETFTLEGDLRRQEGMAMKRLQDIGCLRGRRHRMGLPVRGQRTRTNARTRRGARKTVAGKKK.

The interval 99–121 (GQRTRTNARTRRGARKTVAGKKK) is disordered. Residues 100-121 (QRTRTNARTRRGARKTVAGKKK) show a composition bias toward basic residues.

The protein belongs to the universal ribosomal protein uS13 family. Part of the 30S ribosomal subunit. Forms a loose heterodimer with protein S19. Forms two bridges to the 50S subunit in the 70S ribosome.

Located at the top of the head of the 30S subunit, it contacts several helices of the 16S rRNA. In the 70S ribosome it contacts the 23S rRNA (bridge B1a) and protein L5 of the 50S subunit (bridge B1b), connecting the 2 subunits; these bridges are implicated in subunit movement. Contacts the tRNAs in the A and P-sites. The protein is Small ribosomal subunit protein uS13 of Synechococcus sp. (strain RCC307).